The chain runs to 160 residues: Nucleotide-binding protein BP2916 (160 aa).

Belongs to the YajQ family.

Its function is as follows. Nucleotide-binding protein. This is Nucleotide-binding protein BP2916 from Bordetella pertussis (strain Tohama I / ATCC BAA-589 / NCTC 13251).